Consider the following 1262-residue polypeptide: Synaptopodin-2 (1262 aa).

The interaction with VPS18 stretch occupies residues 1 to 174 (MGTGDFICIS…PGSQEGHLVE (174 aa)). The region spanning 6–88 (FICISMTGGA…SLHLLIKRPT (83 aa)) is the PDZ domain. 2 stretches are compositionally biased toward polar residues: residues 89–105 (SGTSEALDSETENTNHQ) and 246–260 (TSLTSGTTVQTSSGR). Disordered regions lie at residues 89–114 (SGTSEALDSETENTNHQHLPHGGPME) and 239–276 (PAPEKADTSLTSGTTVQTSSGRELTVIQGRDPGGTGLP). S304, S323, and S324 each carry phosphoserine. Residues 323–363 (SSEGTEQGEDQRSGKDQGRPHKHRARHARLRRSESLSEKQV) are disordered. T327 bears the Phosphothreonine mark. Positions 331 to 341 (EDQRSGKDQGR) are enriched in basic and acidic residues. Residues 342-352 (PHKHRARHARL) show a composition bias toward basic residues. Positions 353–363 (RRSESLSEKQV) are enriched in basic and acidic residues. A Nuclear localization signal motif is present at residues 392-400 (KKRRRRARK). Interaction with ACTN2 regions lie at residues 477–658 (MEML…FYDS), 659–922 (SEQI…PPVA), and 899–1153 (QSPT…NIEE). Disordered stretches follow at residues 503-576 (AQNE…GPQR) and 592-703 (NQTA…SPNP). A phosphoserine mark is found at S518, S543, S544, S546, and S549. 2 F-actin binding regions span residues 530 to 658 (TSYQ…FYDS) and 659 to 801 (SEQI…VTAV). Over residues 540 to 552 (RMQSSVSESSFQM) the composition is skewed to low complexity. Positions 554–560 (RSLGSVP) are interaction with YWHAB. S558 carries the post-translational modification Phosphoserine; by PKA. Polar residues-rich tracts occupy residues 558–569 (SVPQQNGFSGVS) and 592–606 (NQTAAPFSPTQSVTS). At S599 the chain carries Phosphoserine. An interaction with YWHAB region spans residues 602 to 809 (QSVTSPIPDF…AVSSIKIAQP (208 aa)). At T605 the chain carries Phosphothreonine; by PKA and CaMK2. S606 bears the Phosphoserine mark. Composition is skewed to pro residues over residues 609 to 625 (PDFPAPPPYSAVSPPPE) and 639 to 650 (AQPPPWPQPAPW). The tract at residues 610–621 (DFPAPPPYSAVS) is interaction with BAG3. The PPPY motif motif lies at 614–617 (PPPY). Y617 bears the Phosphotyrosine mark. The residue at position 621 (S621) is a Phosphoserine. The F-actin bundling activity stretch occupies residues 659–914 (SEQIASRDER…LPASWKYSSN (256 aa)). 2 positions are modified to phosphoserine: S700 and S724. Disordered regions lie at residues 741 to 799 (MQSS…PQVT) and 833 to 868 (VVSHNYTPKPSAPTPLVNAAPAGAGGPSNELPGMSG). An actin binding region spans residues 745–898 (AKQKTPPPVA…DTVQAHTVRA (154 aa)). A Phosphothreonine modification is found at T749. Over residues 756–782 (KPAVKTSSSSQPVAPVSPVWSPGVAPA) the composition is skewed to low complexity. S772 and S776 each carry phosphoserine. Residues 786 to 799 (AFSTTNPPNPPQVT) are compositionally biased toward polar residues. Residues 808-1153 (QPTCPPARPA…EAFRPRNIEE (346 aa)) are interaction with FLNC. S900, S904, and S908 each carry phosphoserine. A disordered region spans residues 933-957 (LAAIKSQPPGAQASKTSKKKGKKPL). Residues 999 to 1018 (PAMKQALPPRQADIGSPTNA) form an interaction with ZYX region. Residues S1014, S1055, and S1090 each carry the phosphoserine modification.

This sequence belongs to the synaptopodin family. May self-associate in muscle cells under oxidative stress. Binds F-actin. Interacts with ACTN2; ACTN2 is proposed to anchor SYOP2 at Z lines in mature myocytes. Interacts with AKAP6, PPP3CA and CAMK2A. Interacts (phosphorylated form) with YWHAB; YWHAB competes with ACTN2 for interaction with SYNPO2. Interacts with KPNA2; mediating nuclear import of SYNOP2; dependent on interaction with YWHAB. Interacts with IPO13; may be implicated in SYNOP2 nuclear import. Interacts with ZYX, FLNC, ILK. Interacts with BAG3 (via WW 1 domain). May associate with the CASA complex consisting of HSPA8, HSPB8 and BAG3. Interacts with VPS18. Post-translationally, phosphorylated by PKA, and by CaMK2 at multiple sites. Dephosphorylated by calcineurin at Ser-558 and Thr-605; abrogating interaction with YWHAB and impairing nuclear import.

It localises to the nucleus. It is found in the cytoplasm. Its subcellular location is the cytoskeleton. The protein localises to the myofibril. The protein resides in the sarcomere. It localises to the z line. It is found in the cell junction. Its subcellular location is the focal adhesion. Has an actin-binding and actin-bundling activity. Can induce the formation of F-actin networks. At the sarcomeric Z lines is proposed to act as adapter protein that links nascent myofibers to the sarcolemma via ZYX and may play a role in early assembly and stabilization of the Z lines. Involved in autophagosome formation. May play a role in chaperone-assisted selective autophagy (CASA) involved in Z lines maintenance in striated muscle under mechanical tension; may link the client-processing CASA chaperone machinery to a membrane-tethering and fusion complex providing autophagosome membranes. Involved in regulation of cell migration. May be a tumor suppressor. The polypeptide is Synaptopodin-2 (Synpo2) (Rattus norvegicus (Rat)).